Consider the following 501-residue polypeptide: Lysine--tRNA ligase (501 aa).

Positions 411 and 418 each coordinate Mg(2+).

It belongs to the class-II aminoacyl-tRNA synthetase family. As to quaternary structure, homodimer. It depends on Mg(2+) as a cofactor.

The protein resides in the cytoplasm. The catalysed reaction is tRNA(Lys) + L-lysine + ATP = L-lysyl-tRNA(Lys) + AMP + diphosphate. This chain is Lysine--tRNA ligase, found in Clostridium perfringens (strain 13 / Type A).